Reading from the N-terminus, the 671-residue chain is Putative protein kinase C delta type homolog (671 aa).

The tract at residues 1–136 (MMFTRAQVRK…ITNRRGAIKH (136 aa)) is disordered. The span at 14 to 27 (SNSSSQRPRSSGGS) shows a compositional bias: low complexity. A compositionally biased stretch (basic and acidic residues) spans 57–101 (ARRDQYRDRDHYGKHSFELPRQHSKEEAYHRDRESSAGGVDRGER). Residues 102-116 (SGIGGNGGGVTGGGV) show a composition bias toward gly residues. 2 Phorbol-ester/DAG-type zinc fingers span residues 144-194 (GHRF…LGKC) and 216-266 (PHRF…ANLC). Residues 343-601 (FHFLAVLGKG…AGDIADHIFF (259 aa)) form the Protein kinase domain. Residues 349–357 (LGKGSFGKV) and Lys-372 contribute to the ATP site. The active-site Proton acceptor is the Asp-467. The 70-residue stretch at 602 to 671 (RPIDWGLLEK…TYTNPHITLD (70 aa)) folds into the AGC-kinase C-terminal domain.

This sequence belongs to the protein kinase superfamily. AGC Ser/Thr protein kinase family. PKC subfamily.

It carries out the reaction L-seryl-[protein] + ATP = O-phospho-L-seryl-[protein] + ADP + H(+). It catalyses the reaction L-threonyl-[protein] + ATP = O-phospho-L-threonyl-[protein] + ADP + H(+). The polypeptide is Putative protein kinase C delta type homolog (Drosophila melanogaster (Fruit fly)).